Reading from the N-terminus, the 67-residue chain is Small ribosomal subunit protein eS27 (67 aa).

Residues Cys-22, Cys-25, Cys-41, and Cys-44 each coordinate Zn(2+). The segment at 22–44 (CPDCGNEQVVFSHAAMVVRCLVC) adopts a C4-type zinc-finger fold.

It belongs to the eukaryotic ribosomal protein eS27 family. As to quaternary structure, part of the 30S ribosomal subunit. The cofactor is Zn(2+).

In Pyrobaculum islandicum (strain DSM 4184 / JCM 9189 / GEO3), this protein is Small ribosomal subunit protein eS27.